Consider the following 1787-residue polypeptide: Chromodomain-helicase-DNA-binding protein 3 homolog (1787 aa).

Disordered stretches follow at residues 1 to 80 (MSDD…PDPY) and 170 to 258 (PVTP…KEQG). Positions 10–43 (DGDETMEEDSMLAEGHEDGEEDVGEDEEEVETEE) are enriched in acidic residues. A compositionally biased stretch (basic residues) spans 56-71 (PPPKKKKGGKKSSKKK). Positions 192–243 (DGSDGEGGGHDSDQEFEALIKQHEKQQDEAEKGKEEARINRAAAKVDKRKAA) are enriched in basic and acidic residues. 2 PHD-type zinc fingers span residues 265 to 312 (QENC…CEEH) and 328 to 375 (MDYC…CIIP). Chromo domains follow at residues 373–476 (IIPE…STLS) and 501–583 (MQIH…GPKE). A Helicase ATP-binding domain is found at 628 to 812 (RHCWSNGTDA…FHLLNFLAPD (185 aa)). 641 to 648 (DEMGLGKT) contributes to the ATP binding site. Residues 763–766 (DEAH) carry the DEAH box motif. One can recognise a Helicase C-terminal domain in the interval 944-1107 (LLQKMLRKLK…GKSMSKTELD (164 aa)). Disordered regions lie at residues 1120-1141 (EEEA…PNEQ), 1186-1212 (TKEA…QDPN), 1248-1295 (ENMG…EERS), and 1754-1787 (RASS…YPRY). Over residues 1190 to 1199 (DDADDDEDET) the composition is skewed to acidic residues. Over residues 1248–1261 (ENMGQDWSAQNNQQ) the composition is skewed to polar residues. The segment covering 1761 to 1773 (TKDEPMDTSDKDI) has biased composition (basic and acidic residues).

It belongs to the SNF2/RAD54 helicase family. In terms of tissue distribution, expressed in the head and vulva.

The protein resides in the nucleus. The enzyme catalyses ATP + H2O = ADP + phosphate + H(+). Functionally, ATP-dependent chromatin-remodeling factor that has a role in notch signaling-dependent vulval cell fate determination. May also have a role in pharyngeal precursor cell specification. The polypeptide is Chromodomain-helicase-DNA-binding protein 3 homolog (chd-3) (Caenorhabditis elegans).